A 37-amino-acid polypeptide reads, in one-letter code: Turripeptide Lol6.2 (37 aa).

3 cysteine pairs are disulfide-bonded: Cys4–Cys16, Cys8–Cys21, and Cys15–Cys29.

In terms of tissue distribution, expressed by the venom duct.

The protein resides in the secreted. Acts as a neurotoxin by inhibiting an ion channel. The protein is Turripeptide Lol6.2 of Iotyrris olangoensis (Sea snail).